The following is a 358-amino-acid chain: Probable tartrate dehydrogenase/decarboxylase TtuC' (358 aa).

Asp-222, Asp-246, and Asp-250 together coordinate Mn(2+).

The protein belongs to the isocitrate and isopropylmalate dehydrogenases family. It depends on Mg(2+) as a cofactor. Mn(2+) serves as cofactor. The cofactor is K(+).

Its subcellular location is the cytoplasm. The enzyme catalyses tartrate + NAD(+) = 2-hydroxy-3-oxosuccinate + NADH + H(+). The catalysed reaction is (2R,3S)-tartrate + NAD(+) = 2-hydroxy-3-oxosuccinate + NADH + H(+). It catalyses the reaction (2R,3R)-tartrate + NAD(+) = 2-hydroxy-3-oxosuccinate + NADH + H(+). It carries out the reaction (2R,3R)-tartrate + H(+) = (R)-glycerate + CO2. The enzyme catalyses (R)-malate + NAD(+) = pyruvate + CO2 + NADH. Its pathway is carbohydrate acid metabolism; tartrate degradation; 2-hydroxy-3-oxosuccinate from L-tartrate: step 1/1. It participates in carbohydrate acid metabolism; tartrate degradation; 2-hydroxy-3-oxosuccinate from meso-tartrate: step 1/1. It functions in the pathway carbohydrate acid metabolism; tartrate degradation; D-glycerate from L-tartrate: step 1/1. In terms of biological role, has multiple catalytic activities. Apart from catalyzing the oxidation of (+)-tartrate to oxaloglycolate, also converts meso-tartrate to D-glycerate and catalyzes the oxidative decarboxylation of D-malate to pyruvate. This chain is Probable tartrate dehydrogenase/decarboxylase TtuC' (ttuC'), found in Agrobacterium vitis (Rhizobium vitis).